Reading from the N-terminus, the 187-residue chain is uncharacterized protein (187 aa).

Residues 1–17 (MYAGGRVVRSAFARGKV) form the signal peptide. Cys18 carries N-palmitoyl cysteine lipidation. Cys18 carries the S-diacylglycerol cysteine lipid modification.

The protein resides in the cell membrane. This is an uncharacterized protein from Treponema pallidum (strain Nichols).